We begin with the raw amino-acid sequence, 166 residues long: NAD(P)H-quinone oxidoreductase subunit I, chloroplastic (166 aa).

4Fe-4S ferredoxin-type domains are found at residues 55 to 84 (GRIHFEFDKCIACEVCVRVCPIDLPVVDWK) and 95 to 124 (LNYSIDFGICIFCGNCVEYCPTNCLSMTEE). Residues Cys-64, Cys-67, Cys-70, Cys-74, Cys-104, Cys-107, Cys-110, and Cys-114 each coordinate [4Fe-4S] cluster.

This sequence belongs to the complex I 23 kDa subunit family. As to quaternary structure, NDH is composed of at least 16 different subunits, 5 of which are encoded in the nucleus. It depends on [4Fe-4S] cluster as a cofactor.

It is found in the plastid. The protein resides in the chloroplast thylakoid membrane. It carries out the reaction a plastoquinone + NADH + (n+1) H(+)(in) = a plastoquinol + NAD(+) + n H(+)(out). The catalysed reaction is a plastoquinone + NADPH + (n+1) H(+)(in) = a plastoquinol + NADP(+) + n H(+)(out). In terms of biological role, NDH shuttles electrons from NAD(P)H:plastoquinone, via FMN and iron-sulfur (Fe-S) centers, to quinones in the photosynthetic chain and possibly in a chloroplast respiratory chain. The immediate electron acceptor for the enzyme in this species is believed to be plastoquinone. Couples the redox reaction to proton translocation, and thus conserves the redox energy in a proton gradient. The polypeptide is NAD(P)H-quinone oxidoreductase subunit I, chloroplastic (Picradeniopsis absinthifolia (Hairyseed bahia)).